We begin with the raw amino-acid sequence, 202 residues long: Sperm-specific H1/protamine-like protein type 1 (202 aa).

Over residues 1-35 (MPSPSRKSRSRSRSRSKSPKRSPAKKARKTPKKPR) the composition is skewed to basic residues. 2 disordered regions span residues 1–46 (MPSP…PTTL) and 104–202 (KTSA…QFAL). One can recognise an H15 domain in the interval 41–120 (KKPTTLSMIV…GATGSFRVGK (80 aa)). Positions 126–156 (KKAKKAKSPKKKSSKKSKNKSNNAKAKKSPK) are enriched in basic residues. Positions 177-187 (GARYPFRYQAY) are enriched in low complexity.

OE1 and OE3 are produced by post-translational cleavage of a common precursor. As to expression, sperm.

It is found in the nucleus. Its subcellular location is the chromosome. Its function is as follows. Linker histones are implicated in chromatin remodeling and/or transcriptional regulation during spermiogenesis, the process of spermatid maturation into spermatozoa. Protamines substitute for histones in the chromatin of sperm during the haploid phase of spermatogenesis. They compact sperm DNA into a highly condensed, stable and inactive complex. The protein is Sperm-specific H1/protamine-like protein type 1 of Ostrea edulis (Native oyster).